Reading from the N-terminus, the 211-residue chain is Superoxide dismutase [Fe] (211 aa).

Fe cation-binding residues include His31, His79, Asp165, and His169.

It belongs to the iron/manganese superoxide dismutase family. As to quaternary structure, homotetramer. It depends on Fe cation as a cofactor.

The catalysed reaction is 2 superoxide + 2 H(+) = H2O2 + O2. In terms of biological role, destroys superoxide anion radicals which are normally produced within the cells and which are toxic to biological systems. The polypeptide is Superoxide dismutase [Fe] (sod) (Pyrobaculum aerophilum (strain ATCC 51768 / DSM 7523 / JCM 9630 / CIP 104966 / NBRC 100827 / IM2)).